Here is a 551-residue protein sequence, read N- to C-terminus: Serine beta-lactamase-like protein LACTB, mitochondrial (551 aa).

A mitochondrion-targeting transit peptide spans 1-113 (MYRLLSSVTA…RAIESSRDLL (113 aa)). Residues 69–101 (PADPEASGTTELSHEQALSPGSPHTPAPPAARG) are disordered. Catalysis depends on S162, which acts as the Acyl-ester intermediate. Residues 237–287 (LKMVKGTPPPSDQEKELKEKGGKNNEKSDAPKAKVEQDSEARCRSAKPGKK) form a disordered region. The segment covering 248 to 279 (DQEKELKEKGGKNNEKSDAPKAKVEQDSEARC) has biased composition (basic and acidic residues). N6-succinyllysine occurs at positions 287 and 288. N6-acetyllysine occurs at positions 301 and 346.

The protein belongs to the peptidase S12 family. As to expression, expressed predominantly in liver.

It localises to the mitochondrion. In terms of biological role, mitochondrial serine protease that acts as a regulator of mitochondrial lipid metabolism. Acts by decreasing protein levels of PISD, a mitochondrial enzyme that converts phosphatidylserine (PtdSer) to phosphatidylethanolamine (PtdEtn), thereby affecting mitochondrial lipid metabolism. It is unclear whether it acts directly by mediating proteolysis of PISD or by mediating proteolysis of another lipid metabolism protein. Acts as a tumor suppressor that has the ability to inhibit proliferation of multiple types of cancer cells: probably by promoting decreased levels of PISD, thereby affecting mitochondrial lipid metabolism. The protein is Serine beta-lactamase-like protein LACTB, mitochondrial of Mus musculus (Mouse).